Here is a 160-residue protein sequence, read N- to C-terminus: 2-C-methyl-D-erythritol 2,4-cyclodiphosphate synthase (160 aa).

Positions 12 and 14 each coordinate a divalent metal cation. 4-CDP-2-C-methyl-D-erythritol 2-phosphate-binding positions include 12–14 (DVH) and 38–39 (HS). His-46 provides a ligand contact to a divalent metal cation. 4-CDP-2-C-methyl-D-erythritol 2-phosphate-binding positions include 60-62 (DIG), 65-69 (FPDTD), 136-139 (TTTE), Phe-143, and Arg-146.

Belongs to the IspF family. In terms of assembly, homotrimer. Requires a divalent metal cation as cofactor.

It catalyses the reaction 4-CDP-2-C-methyl-D-erythritol 2-phosphate = 2-C-methyl-D-erythritol 2,4-cyclic diphosphate + CMP. It functions in the pathway isoprenoid biosynthesis; isopentenyl diphosphate biosynthesis via DXP pathway; isopentenyl diphosphate from 1-deoxy-D-xylulose 5-phosphate: step 4/6. Its function is as follows. Involved in the biosynthesis of isopentenyl diphosphate (IPP) and dimethylallyl diphosphate (DMAPP), two major building blocks of isoprenoid compounds. Catalyzes the conversion of 4-diphosphocytidyl-2-C-methyl-D-erythritol 2-phosphate (CDP-ME2P) to 2-C-methyl-D-erythritol 2,4-cyclodiphosphate (ME-CPP) with a corresponding release of cytidine 5-monophosphate (CMP). The polypeptide is 2-C-methyl-D-erythritol 2,4-cyclodiphosphate synthase (Acinetobacter baumannii (strain SDF)).